The primary structure comprises 113 residues: ATP-dependent Clp protease adapter protein ClpS (113 aa).

Positions 1-26 (MLMQPLMMSDNPDDESDLGLLTKTRP) are disordered.

The protein belongs to the ClpS family. In terms of assembly, binds to the N-terminal domain of the chaperone ClpA.

Functionally, involved in the modulation of the specificity of the ClpAP-mediated ATP-dependent protein degradation. The chain is ATP-dependent Clp protease adapter protein ClpS from Ruegeria sp. (strain TM1040) (Silicibacter sp.).